A 312-amino-acid chain; its full sequence is Ribonuclease Z (312 aa).

Zn(2+) contacts are provided by His-63, His-65, Asp-67, His-68, His-141, Asp-212, and His-270. Asp-67 serves as the catalytic Proton acceptor.

It belongs to the RNase Z family. Homodimer. The cofactor is Zn(2+).

The enzyme catalyses Endonucleolytic cleavage of RNA, removing extra 3' nucleotides from tRNA precursor, generating 3' termini of tRNAs. A 3'-hydroxy group is left at the tRNA terminus and a 5'-phosphoryl group is left at the trailer molecule.. In terms of biological role, zinc phosphodiesterase, which displays some tRNA 3'-processing endonuclease activity. Probably involved in tRNA maturation, by removing a 3'-trailer from precursor tRNA. The chain is Ribonuclease Z from Lactobacillus helveticus (strain DPC 4571).